Here is a 679-residue protein sequence, read N- to C-terminus: tRNA uridine 5-carboxymethylaminomethyl modification enzyme MnmG (679 aa).

An FAD-binding site is contributed by 15–20 (GAGHAG). NAD(+) is bound at residue 314–328 (GPRYCPSIEDKIVRF).

This sequence belongs to the MnmG family. Homodimer. Heterotetramer of two MnmE and two MnmG subunits. Requires FAD as cofactor.

The protein resides in the cytoplasm. Functionally, NAD-binding protein involved in the addition of a carboxymethylaminomethyl (cmnm) group at the wobble position (U34) of certain tRNAs, forming tRNA-cmnm(5)s(2)U34. The protein is tRNA uridine 5-carboxymethylaminomethyl modification enzyme MnmG of Roseiflexus sp. (strain RS-1).